Reading from the N-terminus, the 500-residue chain is NAD(P)H-quinone oxidoreductase chain 4, chloroplastic (500 aa).

The next 14 membrane-spanning stretches (helical) occupy residues Phe4–Leu24, Tyr35–Phe55, Ile87–Val107, Leu113–Ser130, Leu134–Met154, Phe167–Leu187, Ile211–His231, His242–Val262, Ala272–Ala292, Ile305–Asp325, Gly330–Gly350, Leu386–Thr406, Ile416–Met436, and Leu462–Val482.

The protein belongs to the complex I subunit 4 family.

The protein resides in the plastid. It is found in the chloroplast thylakoid membrane. It carries out the reaction a plastoquinone + NADH + (n+1) H(+)(in) = a plastoquinol + NAD(+) + n H(+)(out). It catalyses the reaction a plastoquinone + NADPH + (n+1) H(+)(in) = a plastoquinol + NADP(+) + n H(+)(out). In Draba nemorosa (Woodland whitlowgrass), this protein is NAD(P)H-quinone oxidoreductase chain 4, chloroplastic.